The primary structure comprises 561 residues: Putative transport protein KPN78578_08530 (561 aa).

5 consecutive transmembrane segments (helical) span residues 8-28, 37-57, 66-86, 94-114, and 158-178; these read LLNGNYILLLFVVLALGLCLG, LGNSIGVLVVSLLLGQQHFAI, FMLFIFCVGVEAGPNFFSIFF, MLALVMVGSAMLIAMVLGKVF, and HLSLGYALTYLVGLVSLIVGA. RCK C-terminal domains follow at residues 202–288 and 292–373; these read LDTD…SFRN and VFDR…RIGF. A run of 5 helical transmembrane segments spans residues 383–403, 406–426, 447–467, 478–498, and 540–560; these read LLAFCAFFIVGLMIGMITFQF, FSFGIGNAAGLLFAGIMLGFL, FGLMVFMAGVGLSAGAGINNG, AGLIVSLVPVVICFLFGAYVL, and AIANVLLTLAGTLIVIIWPGL.

This sequence belongs to the AAE transporter (TC 2.A.81) family. YbjL subfamily.

The protein localises to the cell membrane. The protein is Putative transport protein KPN78578_08530 of Klebsiella pneumoniae subsp. pneumoniae (strain ATCC 700721 / MGH 78578).